A 535-amino-acid chain; its full sequence is Proto-oncogene tyrosine-protein kinase Src (535 aa).

Residues 1-56 (MGSNKSKPKDASQRRRSLEPSENVHGAGGAFPASQTPSKPASADGHRGPSAAFVPP) form a disordered region. Glycine 2 carries the N-myristoyl glycine lipid modification. The segment covering 7-19 (KPKDASQRRRSLE) has biased composition (basic and acidic residues). Residues serine 17, serine 21, and serine 74 each carry the phosphoserine modification. Residues 83-144 (GGVTTFVALY…PSNYVAPSDS (62 aa)) form the SH3 domain. The 98-residue stretch at 150 to 247 (WYFGKITRRE…GLCHRLTTVC (98 aa)) folds into the SH2 domain. Phosphotyrosine is present on tyrosine 186. The Protein kinase domain maps to 269-522 (LRLEVKLGQG…YLQAFLEDYF (254 aa)). Residues 275-283 (LGQGCFGEV) and lysine 297 contribute to the ATP site. Aspartate 388 serves as the catalytic Proton acceptor. A Phosphotyrosine; by autocatalysis modification is found at tyrosine 418. Tyrosine 418 is subject to Phosphotyrosine; by FAK2. Tyrosine 529 is modified (phosphotyrosine; by CSK).

The protein belongs to the protein kinase superfamily. Tyr protein kinase family. SRC subfamily. Part of a complex comprised of PTPRA, BCAR1, BCAR3 (via SH2 domain) and SRC; the formation of the complex is dependent on integrin mediated-tyrosine phosphorylation of PTPRA. Interacts with CDCP1, TGFB1I1 and TOM1L2. Interacts with DDEF1/ASAP1 via its SH3 domain. Interacts with CCPG1. Interacts with the cytoplasmic domain of MUC1, phosphorylates it and increases binding of MUC1 with beta-catenin. Interacts with RALGPS1 via its SH3 domain. Interacts with CAV2 (tyrosine phosphorylated form). Interacts (via the SH3 domain and the protein kinase domain) with ARRB1; the interaction is independent of the phosphorylation state of SRC C-terminus. Interacts with FCAMR and PXN. Interacts with ARRB2. Interacts with ARRB1. Interacts with SRCIN1. Interacts with NDFIP2 and more weakly with NDFIP1. Interacts with PIK3CA and/or PIK3C2B, PTK2/FAK1, ESR1 (dimethylated on arginine) and FAK. Interacts (via SH2 and SH3 domain) with TNK2. Interacts (via protein kinase domain) with the tyrosine phosphorylated form of RUNX3 (via runt domain). Interacts with TRAF3 (via RING-type zinc finger domain). Interacts with RIGI, MAVS and TBK1. Interacts (via SH2 domain) with RACK1; the interaction is enhanced by tyrosine phosphorylation of RACK1 and inhibits SRC activity. Interacts (via SH2 domain) with the 'Tyr-402' phosphorylated form of PTK2B/PYK2. Interacts (via SH2 domain) with FLT3 (tyrosine phosphorylated). Identified in a complex containing FGFR4, NCAM1, CDH2, PLCG1, FRS2, SRC, SHC1, GAP43 and CTTN. Interacts with EPHB1; activates the MAPK/ERK cascade to regulate cell migration. Interacts with ERBB2 and STAT1. Interacts with PDGFRA (tyrosine phosphorylated). Interacts with CSF1R. Interacts (via SH2 domain) with the 'Tyr-9' phosphorylated form of PDPK1. Interacts with DDR2. Interacts with AMOTL2; this interaction regulates the translocation of phosphorylated SRC to peripheral cell-matrix adhesion sites. Interacts with DDR1 and DAB2. Interacts with TRAP1. Interacts with CBLC; the interaction is enhanced when SRC is phosphorylated at 'Tyr-424'. Interacts with ARHGEF5. Interacts (via cytoplasmic domain) with CEACAM1 (via SH2 domain); this interaction is regulated by trans-homophilic cell adhesion. Interacts with MPP2. Interacts with PRR7. Interacts (via kinase domain and to a lesser extent the SH2 domain) directly with PDLIM4; this interaction results in PTPN13-mediated dephosphorylation of this protein leading to its inactivation. Interacts with P85 (PIK3R1 or PIK3R2). Interacts with HNRNPA2B1. Interacts with IL6ST/gp130. Interacts (via SH3 domain) with PELP1 in the presence of 17-beta-estradiol. Interacts with AMBRA1. In terms of processing, myristoylated at Gly-2, and this is essential for targeting to membranes. Dephosphorylated at Tyr-529 by PTPRJ. Phosphorylated on Tyr-529 by c-Src kinase (CSK). The phosphorylated form is termed pp60c-src. Dephosphorylated by PTPRJ at Tyr-418. Normally maintained in an inactive conformation with the SH2 domain engaged with Tyr-529, the SH3 domain engaged with the SH2-kinase linker, and Tyr-418 dephosphorylated. Dephosphorylation of Tyr-529 as a result of protein tyrosine phosphatase (PTP) action disrupts the intramolecular interaction between the SH2 domain and Tyr-529, Tyr-418 can then become autophosphorylated, resulting in SRC activation. Phosphorylation of Tyr-529 by CSK allows this interaction to reform, resulting in SRC inactivation. CDK5-mediated phosphorylation at Ser-74 targets SRC to ubiquitin-dependent degradation and thus leads to cytoskeletal reorganization. Phosphorylated by PTK2/FAK1; this enhances kinase activity. Phosphorylated by PTK2B/PYK2; this enhances kinase activity. Upon activation of IL6ST by IL6, Tyr-418 is phosphorylated and Tyr-529 dephosphorylated. Post-translationally, displays reduced levels of autophosphorylation at Tyr-418 compared to isoform 2. In terms of processing, displays enhanced levels of autophosphorylation at Tyr-418 compared to isoform 1. S-nitrosylation is important for activation of its kinase activity. Post-translationally, ubiquitinated in response to CDK5-mediated phosphorylation. Ubiquitination mediated by CBLC requires SRC autophosphorylation at Tyr-418 and may lead to lysosomal degradation.

It localises to the cell membrane. It is found in the mitochondrion inner membrane. The protein localises to the nucleus. The protein resides in the cytoplasm. Its subcellular location is the cytoskeleton. It localises to the perinuclear region. It is found in the cell junction. The protein localises to the focal adhesion. It catalyses the reaction L-tyrosyl-[protein] + ATP = O-phospho-L-tyrosyl-[protein] + ADP + H(+). With respect to regulation, phosphorylation by CSK at Tyr-529 inhibits kinase activity. Inhibitory phosphorylation at Tyr-529 is enhanced by heme. Further phosphorylation by CDK1 partially reactivates CSK-inactivated SRC and facilitates complete reactivation by protein tyrosine phosphatase PTPRC. Integrin engagement stimulates kinase activity. Phosphorylation by PTK2/FAK1 enhances kinase activity. Butein and pseudosubstrate-based peptide inhibitors like CIYKYYF act as inhibitors. Phosphorylation at Tyr-418 increases kinase activity. In terms of biological role, non-receptor protein tyrosine kinase which is activated following engagement of many different classes of cellular receptors including immune response receptors, integrins and other adhesion receptors, receptor protein tyrosine kinases, G protein-coupled receptors as well as cytokine receptors. Participates in signaling pathways that control a diverse spectrum of biological activities including gene transcription, immune response, cell adhesion, cell cycle progression, apoptosis, migration, and transformation. Due to functional redundancy between members of the SRC kinase family, identification of the specific role of each SRC kinase is very difficult. SRC appears to be one of the primary kinases activated following engagement of receptors and plays a role in the activation of other protein tyrosine kinase (PTK) families. Receptor clustering or dimerization leads to recruitment of SRC to the receptor complexes where it phosphorylates the tyrosine residues within the receptor cytoplasmic domains. Plays an important role in the regulation of cytoskeletal organization through phosphorylation of specific substrates such as AFAP1. Phosphorylation of AFAP1 allows the SRC SH2 domain to bind AFAP1 and to localize to actin filaments. Cytoskeletal reorganization is also controlled through the phosphorylation of cortactin (CTTN). When cells adhere via focal adhesions to the extracellular matrix, signals are transmitted by integrins into the cell resulting in tyrosine phosphorylation of a number of focal adhesion proteins, including PTK2/FAK1 and paxillin (PXN). In addition to phosphorylating focal adhesion proteins, SRC is also active at the sites of cell-cell contact adherens junctions and phosphorylates substrates such as beta-catenin (CTNNB1), delta-catenin (CTNND1), and plakoglobin (JUP). Another type of cell-cell junction, the gap junction, is also a target for SRC, which phosphorylates connexin-43 (GJA1). SRC is implicated in regulation of pre-mRNA-processing and phosphorylates RNA-binding proteins such as KHDRBS1. Phosphorylates PKP3 at 'Tyr-195' in response to reactive oxygen species, which may cause the release of PKP3 from desmosome cell junctions into the cytoplasm. Also plays a role in PDGF-mediated tyrosine phosphorylation of both STAT1 and STAT3, leading to increased DNA binding activity of these transcription factors. Involved in the RAS pathway through phosphorylation of RASA1 and RASGRF1. Plays a role in EGF-mediated calcium-activated chloride channel activation. Required for epidermal growth factor receptor (EGFR) internalization through phosphorylation of clathrin heavy chain (CLTC and CLTCL1) at 'Tyr-1477'. Involved in beta-arrestin (ARRB1 and ARRB2) desensitization through phosphorylation and activation of GRK2, leading to beta-arrestin phosphorylation and internalization. Has a critical role in the stimulation of the CDK20/MAPK3 mitogen-activated protein kinase cascade by epidermal growth factor. Might be involved not only in mediating the transduction of mitogenic signals at the level of the plasma membrane but also in controlling progression through the cell cycle via interaction with regulatory proteins in the nucleus. Plays an important role in osteoclastic bone resorption in conjunction with PTK2B/PYK2. Both the formation of a SRC-PTK2B/PYK2 complex and SRC kinase activity are necessary for this function. Recruited to activated integrins by PTK2B/PYK2, thereby phosphorylating CBL, which in turn induces the activation and recruitment of phosphatidylinositol 3-kinase to the cell membrane in a signaling pathway that is critical for osteoclast function. Promotes energy production in osteoclasts by activating mitochondrial cytochrome C oxidase. Phosphorylates DDR2 on tyrosine residues, thereby promoting its subsequent autophosphorylation. Phosphorylates RUNX3 and COX2 on tyrosine residues, TNK2 on 'Tyr-284' and CBL on 'Tyr-738'. Enhances RIGI-elicited antiviral signaling. Phosphorylates PDPK1 at 'Tyr-9', 'Tyr-373' and 'Tyr-376'. Phosphorylates BCAR1 at 'Tyr-226'. Phosphorylates CBLC at multiple tyrosine residues, phosphorylation at 'Tyr-341' activates CBLC E3 activity. Phosphorylates synaptic vesicle protein synaptophysin (SYP). Involved in anchorage-independent cell growth. Required for podosome formation. Mediates IL6 signaling by activating YAP1-NOTCH pathway to induce inflammation-induced epithelial regeneration. Phosphorylates OTUB1, promoting deubiquitination of RPTOR. Functionally, non-receptor protein tyrosine kinase which phosphorylates synaptophysin with high affinity. Non-receptor protein tyrosine kinase which shows higher basal kinase activity than isoform 1, possibly due to weakened intramolecular interactions which enhance autophosphorylation of Tyr-418 and subsequent activation. The SH3 domain shows reduced affinity with the linker sequence between the SH2 and kinase domains which may account for the increased basal activity. Displays altered substrate specificity compared to isoform 1, showing weak affinity for synaptophysin and for peptide substrates containing class I or class II SH3 domain-binding motifs. Plays a role in L1CAM-mediated neurite elongation, possibly by acting downstream of L1CAM to drive cytoskeletal rearrangements involved in neurite outgrowth. This is Proto-oncogene tyrosine-protein kinase Src from Mus musculus (Mouse).